The primary structure comprises 598 residues: Kinetochore-associated protein KNL-2 homolog (598 aa).

In terms of domain architecture, SANTA spans 19-111 (VVLRDWWLIK…IFGFPPCWER (93 aa)). 2 stretches are compositionally biased toward basic and acidic residues: residues 335-344 (AKSSKPEKKG) and 371-381 (KSAENKRKIDA). Disordered stretches follow at residues 335 to 403 (AKSS…NNAK), 445 to 500 (KESL…EEAE), 520 to 542 (PEKK…QKRS), and 572 to 598 (KDGS…LKIK). Polar residues predominate over residues 383–392 (KLQSPTSNVA). The segment covering 527-539 (QKTNAASTDSLGQ) has biased composition (polar residues). A required for localization at centromeres region spans residues 538-572 (GQKRSRSGRVLVSSLEFWRNQIPVYDMDRNLIQVK).

It belongs to the KNL2 family. In terms of tissue distribution, expressed in shoot apical meristem, leaf primordia, basal parts of emerging leaves, inflorescence meristems, young inflorescences, developing flower buds, developing sepals and pistils, styles and young siliques.

It localises to the nucleus. Its subcellular location is the nucleoplasm. The protein localises to the nuclear body. It is found in the nucleolus. The protein resides in the chromosome. It localises to the centromere. In terms of biological role, involved in recognition of centromeres and centromeric localization of the centromere-specific histone CENH3. Required for normal progression of mitosis and meiosis. May play a role in the determination of the epigenetic status of centromeres. Binds DNA and RNA in vitro. The protein is Kinetochore-associated protein KNL-2 homolog of Arabidopsis thaliana (Mouse-ear cress).